Reading from the N-terminus, the 198-residue chain is Ribonuclease HII (198 aa).

Positions 6–198 constitute an RNase H type-2 domain; that stretch reads EQIAGVDEVG…APCQASLLPD (193 aa). A divalent metal cation is bound by residues Asp12, Glu13, and Asp108.

The protein belongs to the RNase HII family. It depends on Mn(2+) as a cofactor. The cofactor is Mg(2+).

Its subcellular location is the cytoplasm. It catalyses the reaction Endonucleolytic cleavage to 5'-phosphomonoester.. Endonuclease that specifically degrades the RNA of RNA-DNA hybrids. This is Ribonuclease HII from Acaryochloris marina (strain MBIC 11017).